A 380-amino-acid chain; its full sequence is Chaperone protein DnaJ (380 aa).

Positions 5-72 (DFYEVLGVAK…NKRAAYDQYG (68 aa)) constitute a J domain. The segment at 140–218 (GKDAQIRIPS…CGGQGKVKRQ (79 aa)) adopts a CR-type zinc-finger fold. Residues Cys-153, Cys-156, Cys-170, Cys-173, Cys-192, Cys-195, Cys-206, and Cys-209 each coordinate Zn(2+). 4 CXXCXGXG motif repeats span residues 153–160 (CDTCHGSG), 170–177 (CTTCNGMG), 192–199 (CPHCRGTG), and 206–213 (CTSCGGQG). The disordered stretch occupies residues 359-380 (KGGAKHSPSGESWTDRLKSFFS). Over residues 371–380 (WTDRLKSFFS) the composition is skewed to basic and acidic residues.

Belongs to the DnaJ family. As to quaternary structure, homodimer. Zn(2+) serves as cofactor.

The protein resides in the cytoplasm. Participates actively in the response to hyperosmotic and heat shock by preventing the aggregation of stress-denatured proteins and by disaggregating proteins, also in an autonomous, DnaK-independent fashion. Unfolded proteins bind initially to DnaJ; upon interaction with the DnaJ-bound protein, DnaK hydrolyzes its bound ATP, resulting in the formation of a stable complex. GrpE releases ADP from DnaK; ATP binding to DnaK triggers the release of the substrate protein, thus completing the reaction cycle. Several rounds of ATP-dependent interactions between DnaJ, DnaK and GrpE are required for fully efficient folding. Also involved, together with DnaK and GrpE, in the DNA replication of plasmids through activation of initiation proteins. The polypeptide is Chaperone protein DnaJ (Delftia acidovorans (strain DSM 14801 / SPH-1)).